The chain runs to 108 residues: Nucleoid-associated protein GWCH70_0020 (108 aa).

Positions 1 to 34 (MMRGGMGNMQKMMKQMQKMQKEMQKAQEQLAEKT) are disordered. Over residues 9–18 (MQKMMKQMQK) the composition is skewed to low complexity. Residues 19-34 (MQKEMQKAQEQLAEKT) are compositionally biased toward basic and acidic residues.

It belongs to the YbaB/EbfC family. Homodimer.

The protein localises to the cytoplasm. It is found in the nucleoid. Its function is as follows. Binds to DNA and alters its conformation. May be involved in regulation of gene expression, nucleoid organization and DNA protection. The chain is Nucleoid-associated protein GWCH70_0020 from Geobacillus sp. (strain WCH70).